The primary structure comprises 218 residues: Riboflavin kinase (218 aa).

The segment at 1 to 27 (MRPDGPRDPVAGPDSGPEPPYPVRLSG) is disordered. Mg(2+)-binding residues include Thr-44 and Asn-46. Glu-120 acts as the Nucleophile in catalysis.

This sequence belongs to the flavokinase family. The cofactor is Zn(2+). Mg(2+) is required as a cofactor.

The enzyme catalyses riboflavin + ATP = FMN + ADP + H(+). The protein operates within cofactor biosynthesis; FMN biosynthesis; FMN from riboflavin (ATP route): step 1/1. Functionally, catalyzes the phosphorylation of riboflavin (vitamin B2) to form flavin mononucleotide (FMN) coenzyme. The polypeptide is Riboflavin kinase (fmn1) (Neosartorya fischeri (strain ATCC 1020 / DSM 3700 / CBS 544.65 / FGSC A1164 / JCM 1740 / NRRL 181 / WB 181) (Aspergillus fischerianus)).